The chain runs to 166 residues: NAD(P)H-quinone oxidoreductase subunit I, chloroplastic (166 aa).

2 4Fe-4S ferredoxin-type domains span residues 55–84 (GRIHFEFDKCIACEVCVRVCPIDLPVVDWK) and 95–124 (LNYSIDFGICIFCGNCVEYCPTNCLSMTEE). [4Fe-4S] cluster contacts are provided by Cys-64, Cys-67, Cys-70, Cys-74, Cys-104, Cys-107, Cys-110, and Cys-114.

This sequence belongs to the complex I 23 kDa subunit family. NDH is composed of at least 16 different subunits, 5 of which are encoded in the nucleus. [4Fe-4S] cluster serves as cofactor.

The protein localises to the plastid. The protein resides in the chloroplast thylakoid membrane. It catalyses the reaction a plastoquinone + NADH + (n+1) H(+)(in) = a plastoquinol + NAD(+) + n H(+)(out). The enzyme catalyses a plastoquinone + NADPH + (n+1) H(+)(in) = a plastoquinol + NADP(+) + n H(+)(out). Its function is as follows. NDH shuttles electrons from NAD(P)H:plastoquinone, via FMN and iron-sulfur (Fe-S) centers, to quinones in the photosynthetic chain and possibly in a chloroplast respiratory chain. The immediate electron acceptor for the enzyme in this species is believed to be plastoquinone. Couples the redox reaction to proton translocation, and thus conserves the redox energy in a proton gradient. The polypeptide is NAD(P)H-quinone oxidoreductase subunit I, chloroplastic (Oblivia mikanioides (Salmea mikanioides)).